The chain runs to 315 residues: Methenyltetrahydromethanopterin cyclohydrolase (315 aa).

This sequence belongs to the MCH family.

It localises to the cytoplasm. The enzyme catalyses 5,10-methenyl-5,6,7,8-tetrahydromethanopterin + H2O = N(5)-formyl-5,6,7,8-tetrahydromethanopterin + H(+). It functions in the pathway one-carbon metabolism; methanogenesis from CO(2); 5,10-methenyl-5,6,7,8-tetrahydromethanopterin from CO(2): step 3/3. Its function is as follows. Catalyzes the reversible interconversion of 5-formyl-H(4)MPT to methenyl-H(4)MPT(+). The chain is Methenyltetrahydromethanopterin cyclohydrolase from Methanoculleus marisnigri (strain ATCC 35101 / DSM 1498 / JR1).